We begin with the raw amino-acid sequence, 292 residues long: NAD kinase (292 aa).

Residue aspartate 72 is the Proton acceptor of the active site. NAD(+)-binding positions include 72–73 (DG), 146–147 (NE), histidine 157, arginine 174, aspartate 176, and 187–192 (TAYSLS).

Belongs to the NAD kinase family. A divalent metal cation serves as cofactor.

Its subcellular location is the cytoplasm. It catalyses the reaction NAD(+) + ATP = ADP + NADP(+) + H(+). Functionally, involved in the regulation of the intracellular balance of NAD and NADP, and is a key enzyme in the biosynthesis of NADP. Catalyzes specifically the phosphorylation on 2'-hydroxyl of the adenosine moiety of NAD to yield NADP. The polypeptide is NAD kinase (Shewanella loihica (strain ATCC BAA-1088 / PV-4)).